Consider the following 270-residue polypeptide: Glucosamine-6-phosphate deaminase (270 aa).

Catalysis depends on aspartate 72, which acts as the Proton acceptor; for enolization step. The For ring-opening step role is filled by aspartate 141. The active-site Proton acceptor; for ring-opening step is histidine 143. Glutamate 148 acts as the For ring-opening step in catalysis.

Belongs to the glucosamine/galactosamine-6-phosphate isomerase family. NagB subfamily. Homohexamer.

It catalyses the reaction alpha-D-glucosamine 6-phosphate + H2O = beta-D-fructose 6-phosphate + NH4(+). It functions in the pathway amino-sugar metabolism; N-acetylneuraminate degradation; D-fructose 6-phosphate from N-acetylneuraminate: step 5/5. With respect to regulation, allosterically activated by N-acetylglucosamine 6-phosphate (GlcNAc6P). Its function is as follows. Catalyzes the reversible isomerization-deamination of glucosamine 6-phosphate (GlcN6P) to form fructose 6-phosphate (Fru6P) and ammonium ion. The protein is Glucosamine-6-phosphate deaminase of Haemophilus influenzae (strain PittEE).